We begin with the raw amino-acid sequence, 114 residues long: UPF0212 protein UNCMA_00570 (114 aa).

The protein belongs to the UPF0212 family.

This is UPF0212 protein UNCMA_00570 from Methanocella arvoryzae (strain DSM 22066 / NBRC 105507 / MRE50).